An 871-amino-acid polypeptide reads, in one-letter code: Alanine--tRNA ligase (871 aa).

4 residues coordinate Zn(2+): H561, H565, C665, and H669.

This sequence belongs to the class-II aminoacyl-tRNA synthetase family. It depends on Zn(2+) as a cofactor.

Its subcellular location is the cytoplasm. It catalyses the reaction tRNA(Ala) + L-alanine + ATP = L-alanyl-tRNA(Ala) + AMP + diphosphate. Functionally, catalyzes the attachment of alanine to tRNA(Ala) in a two-step reaction: alanine is first activated by ATP to form Ala-AMP and then transferred to the acceptor end of tRNA(Ala). Also edits incorrectly charged Ser-tRNA(Ala) and Gly-tRNA(Ala) via its editing domain. The chain is Alanine--tRNA ligase from Dehalococcoides mccartyi (strain CBDB1).